Consider the following 295-residue polypeptide: Porphobilinogen deaminase (295 aa).

Cysteine 241 bears the S-(dipyrrolylmethanemethyl)cysteine mark.

Belongs to the HMBS family. In terms of assembly, monomer. Dipyrromethane is required as a cofactor.

It carries out the reaction 4 porphobilinogen + H2O = hydroxymethylbilane + 4 NH4(+). It participates in porphyrin-containing compound metabolism; protoporphyrin-IX biosynthesis; coproporphyrinogen-III from 5-aminolevulinate: step 2/4. Its function is as follows. Tetrapolymerization of the monopyrrole PBG into the hydroxymethylbilane pre-uroporphyrinogen in several discrete steps. The sequence is that of Porphobilinogen deaminase from Lachnospira eligens (strain ATCC 27750 / DSM 3376 / VPI C15-48 / C15-B4) (Eubacterium eligens).